A 43-amino-acid polypeptide reads, in one-letter code: uncharacterized protein (43 aa).

An N-terminal signal peptide occupies residues 1-22 (MKRKIIAIGIFFRLFIIHIHFS).

This is an uncharacterized protein from Schizosaccharomyces pombe (strain 972 / ATCC 24843) (Fission yeast).